Here is a 424-residue protein sequence, read N- to C-terminus: Acetyl-CoA acetyltransferase, mitochondrial (424 aa).

The transit peptide at 1–30 directs the protein to the mitochondrion; that stretch reads MAALAVLHGVVRRPLLRGLLQEVRCLGRSY. The residue at position 63 (Lys-63) is an N6-acetyllysine; alternate. An N6-succinyllysine; alternate modification is found at Lys-63. Lys-75 is modified (N6-succinyllysine). The active-site Acyl-thioester intermediate is Cys-123. 4 positions are modified to N6-acetyllysine; alternate: Lys-171, Lys-178, Lys-187, and Lys-199. 4 positions are modified to N6-succinyllysine; alternate: Lys-171, Lys-178, Lys-187, and Lys-199. Residue Ser-204 is modified to Phosphoserine. Tyr-216 lines the CoA pocket. Tyr-216 contributes to the K(+) binding site. 2 positions are modified to N6-acetyllysine; alternate: Lys-220 and Lys-227. N6-succinyllysine; alternate occurs at positions 220 and 227. N6-succinyllysine is present on Lys-240. An N6-acetyllysine; alternate modification is found at Lys-242. An N6-succinyllysine; alternate modification is found at Lys-242. Residues Lys-248 and Lys-254 each carry the N6-acetyllysine modification. Residues 255–257 and Lys-260 contribute to the CoA site; that span reads RVD. Residue Lys-260 is modified to N6-acetyllysine; alternate. Lys-260 is subject to N6-succinyllysine; alternate. An N6-succinyllysine mark is found at Lys-263 and Lys-265. Lys-270 is subject to N6-acetyllysine. The K(+) site is built by Ala-277, Ala-278, and Ala-280. Ser-281 lines the CoA pocket. At Lys-335 the chain carries N6-acetyllysine. K(+) is bound at residue Val-378. The active-site Proton donor/acceptor is the Cys-410.

It belongs to the thiolase-like superfamily. Thiolase family. As to quaternary structure, homotetramer. In terms of processing, succinylation at Lys-265, adjacent to a coenzyme A binding site. Desuccinylated by SIRT5.

The protein resides in the mitochondrion. The enzyme catalyses 2 acetyl-CoA = acetoacetyl-CoA + CoA. The catalysed reaction is propanoyl-CoA + acetyl-CoA = 2-methyl-3-oxobutanoyl-CoA + CoA. Its pathway is lipid metabolism; fatty acid beta-oxidation. Activated by potassium ions, but not sodium ions. This is one of the enzymes that catalyzes the last step of the mitochondrial beta-oxidation pathway, an aerobic process breaking down fatty acids into acetyl-CoA. Using free coenzyme A/CoA, catalyzes the thiolytic cleavage of medium- to long-chain 3-oxoacyl-CoAs into acetyl-CoA and a fatty acyl-CoA shortened by two carbon atoms. The activity of the enzyme is reversible and it can also catalyze the condensation of two acetyl-CoA molecules into acetoacetyl-CoA. Thereby, it plays a major role in ketone body metabolism. This is Acetyl-CoA acetyltransferase, mitochondrial (Acat1) from Rattus norvegicus (Rat).